The sequence spans 347 residues: Bombesin receptor-activated protein C6orf89 (347 aa).

At 1–58 (MDLAANEISIYDKLSETVDLVRQTGHQCGMSEKAIEKFIRQLLEKNEPQRPPPQYPLL) the chain is on the cytoplasmic side. Residues 59–79 (IVVYKVLATLGLILLTAYFVI) traverse the membrane as a helical segment. Residues 80–347 (QPFSPLAPEP…ICDGTAFSEL (268 aa)) lie on the Extracellular side of the membrane.

Homodimer. Interacts with BRS3. Interacts (via N-terminus) with SIN3B. Glycosylated.

The protein localises to the golgi apparatus membrane. Its subcellular location is the midbody. The protein resides in the cytoplasm. It is found in the nucleus. It localises to the nucleolus. Its function is as follows. Exhibits histone deacetylase (HDAC) enhancer properties. May play a role in cell cycle progression and wound repair of bronchial epithelial cells. This chain is Bombesin receptor-activated protein C6orf89 (C6orf89), found in Homo sapiens (Human).